Reading from the N-terminus, the 354-residue chain is DnaJ homolog shv (354 aa).

Residues 1–22 (MQLIKCLVIIQLSLLLVEESFA) form the signal peptide. The J domain occupies 25 to 90 (DFYKILNVKK…DKRKTYDRCG (66 aa)). Asparagine 260 and asparagine 312 each carry an N-linked (GlcNAc...) asparagine glycan.

In terms of tissue distribution, in the testes, detected at low levels in somatic hub cells, cyst stem cells and the apical tip (at protein level). Levels in the testes decrease with age (at protein level). Expressed at low levels in hub cells, cyst stem cells and germline stem cells, and at high levels in spermatocytes and cyst cells.

It localises to the nucleus. Its subcellular location is the cell membrane. The protein localises to the secreted. In terms of biological role, maintains stem cell niche architecture in the testes. Activates an extracellular integrin beta-PS pathway which regulates DE-cadherin (shg) levels in somatic hub cells, and is essential for maintaining the number of germline stem cells and the structure and localization of hub cells. In Drosophila melanogaster (Fruit fly), this protein is DnaJ homolog shv.